The following is a 429-amino-acid chain: Ubiquinone hydroxylase UbiL (429 aa).

Residues 1–22 are disordered; it reads MSEPLLRGLAAGDPPSATGPVT.

It belongs to the UbiH/COQ6 family. The cofactor is FAD.

It carries out the reaction a 2-(all-trans-polyprenyl)phenol + NADPH + O2 + H(+) = a 3-(all-trans-polyprenyl)benzene-1,2-diol + NADP(+) + H2O. The protein operates within cofactor biosynthesis; ubiquinone biosynthesis. Catalyzes the hydroxylation of two positions of the aromatic ring during ubiquinone biosynthesis. In Rhodospirillum rubrum (strain ATCC 11170 / ATH 1.1.1 / DSM 467 / LMG 4362 / NCIMB 8255 / S1), this protein is Ubiquinone hydroxylase UbiL.